The chain runs to 80 residues: Pigment-dispersing hormone peptides (80 aa).

The N-terminal stretch at 1–20 is a signal peptide; it reads MANYITIAIIVGIVCGQALS. A propeptide spanning residues 21 to 58 is cleaved from the precursor; the sequence is VEDVDRNLLELNLPYGRGLDSELQLARLMLAAPRFCHP. A78 carries the alanine amide modification.

This sequence belongs to the arthropod PDH family. As to expression, expressed in the brain (at protein level).

The protein resides in the secreted. Neuropeptide PDF is the main transmitter regulating circadian locomotor rhythms. This Camponotus floridanus (Florida carpenter ant) protein is Pigment-dispersing hormone peptides.